We begin with the raw amino-acid sequence, 176 residues long: Isopentenyl-diphosphate Delta-isomerase 1 (176 aa).

Positions 23 and 30 each coordinate Mn(2+). The region spanning 28–162 (HLHRAFSCFI…EEFCTPWFKK (135 aa)) is the Nudix hydrolase domain. The active site involves Cys-65. Residue Cys-65 participates in Mg(2+) binding. Position 67 (His-67) interacts with Mn(2+). Glu-85 contacts Mg(2+). Mn(2+) contacts are provided by Glu-112 and Glu-114. Residue Glu-114 is part of the active site.

It belongs to the IPP isomerase type 1 family. Homodimer. Requires Mg(2+) as cofactor. Mn(2+) serves as cofactor.

It is found in the cytoplasm. It catalyses the reaction isopentenyl diphosphate = dimethylallyl diphosphate. It participates in isoprenoid biosynthesis; dimethylallyl diphosphate biosynthesis; dimethylallyl diphosphate from isopentenyl diphosphate: step 1/1. Functionally, catalyzes the 1,3-allylic rearrangement of the homoallylic substrate isopentenyl (IPP) to its highly electrophilic allylic isomer, dimethylallyl diphosphate (DMAPP). The protein is Isopentenyl-diphosphate Delta-isomerase 1 of Photorhabdus laumondii subsp. laumondii (strain DSM 15139 / CIP 105565 / TT01) (Photorhabdus luminescens subsp. laumondii).